A 435-amino-acid chain; its full sequence is MTLDLSTFAREKGVKYFMISYTDLFGGQRAKLVPAEAIADMQKGGAGFAGFATWFDLTPAHPDLFALPDASAVIQLPWKKDVAWVAADCIMDDAPVEQAPRVVLKKLVAEAAQEGLRVKTGVEPEFFLISPDGSKISDTFDTAEKPCYDQQAIMRRYDVIAEICDYMLELGWKPYQNDHEDANGQFEMNWEYDDALRTADKHSFFKFMVKSIAEKHGLRATFMPKPFKGLTGNGCHCHISVWDLAGEVNAFADNKAEFGLSAEGRHFLGGIMKHASALAAVTNPTVNSYKRINAPRTISGATWAPNSVTWTGNNRTHMVRVPGPGRFELRLPDGAVNPYLLQAIIIAAGLSGVRSKADPGRHYDIDMYKDGHKVTDAPKLPLNLLDALREYNRDEELQEALGREFSAAYLKLKQGEWNTYCSQFTEWEHQTTLDV.

One can recognise a GS beta-grasp domain in the interval 12–94 (KGVKYFMISY…VAADCIMDDA (83 aa)). Residues 100–435 (PRVVLKKLVA…EWEHQTTLDV (336 aa)) form the GS catalytic domain. Residues E123, E125, E180, and E187 each coordinate Mg(2+). Residue G232 participates in L-glutamate binding. Residue H236 coordinates Mg(2+). S240 serves as a coordination point for ATP. L-glutamate-binding residues include R291 and R315. Residues R315 and R320 each contribute to the ATP site. E328 contacts Mg(2+). R330 is a binding site for L-glutamate.

Belongs to the glutamine synthetase family. Homooctamer. Mg(2+) serves as cofactor.

It catalyses the reaction L-glutamate + NH4(+) + ATP = L-glutamine + ADP + phosphate + H(+). Its activity is regulated as follows. Inhibited by methionine sulfoximine, ADP and pyrophosphate, but not by various nitrogen-containing metabolites that inhibit other GS enzymes. Its function is as follows. Catalyzes the ATP-dependent biosynthesis of glutamine from glutamate and ammonia. The sequence is that of Glutamine synthetase from Rhizobium meliloti (strain 1021) (Ensifer meliloti).